A 339-amino-acid chain; its full sequence is Ketol-acid reductoisomerase (NADP(+)) (339 aa).

The KARI N-terminal Rossmann domain occupies 1–182; sequence MPNRYYEKDG…GCLKAGVIDT (182 aa). Residues 25 to 28, Ser51, Ser53, and 83 to 86 each bind NADP(+); these read YGSQ and DHIQ. Residue His108 is part of the active site. Gly134 lines the NADP(+) pocket. The KARI C-terminal knotted domain occupies 183-328; sequence NFREETESDL…RELREMMTFL (146 aa). Mg(2+) contacts are provided by Asp191, Glu195, Glu227, and Glu231. Residue Ser252 coordinates substrate.

It belongs to the ketol-acid reductoisomerase family. Mg(2+) is required as a cofactor.

It carries out the reaction (2R)-2,3-dihydroxy-3-methylbutanoate + NADP(+) = (2S)-2-acetolactate + NADPH + H(+). The enzyme catalyses (2R,3R)-2,3-dihydroxy-3-methylpentanoate + NADP(+) = (S)-2-ethyl-2-hydroxy-3-oxobutanoate + NADPH + H(+). The protein operates within amino-acid biosynthesis; L-isoleucine biosynthesis; L-isoleucine from 2-oxobutanoate: step 2/4. It functions in the pathway amino-acid biosynthesis; L-valine biosynthesis; L-valine from pyruvate: step 2/4. Involved in the biosynthesis of branched-chain amino acids (BCAA). Catalyzes an alkyl-migration followed by a ketol-acid reduction of (S)-2-acetolactate (S2AL) to yield (R)-2,3-dihydroxy-isovalerate. In the isomerase reaction, S2AL is rearranged via a Mg-dependent methyl migration to produce 3-hydroxy-3-methyl-2-ketobutyrate (HMKB). In the reductase reaction, this 2-ketoacid undergoes a metal-dependent reduction by NADPH to yield (R)-2,3-dihydroxy-isovalerate. The chain is Ketol-acid reductoisomerase (NADP(+)) from Solibacter usitatus (strain Ellin6076).